The chain runs to 82 residues: Small ribosomal subunit protein bS16 (82 aa).

Belongs to the bacterial ribosomal protein bS16 family.

The sequence is that of Small ribosomal subunit protein bS16 from Vibrio cholerae serotype O1 (strain ATCC 39541 / Classical Ogawa 395 / O395).